We begin with the raw amino-acid sequence, 481 residues long: Probable glycine dehydrogenase (decarboxylating) subunit 2 (481 aa).

At Lys269 the chain carries N6-(pyridoxal phosphate)lysine.

It belongs to the GcvP family. C-terminal subunit subfamily. As to quaternary structure, the glycine cleavage system is composed of four proteins: P, T, L and H. In this organism, the P 'protein' is a heterodimer of two subunits. Pyridoxal 5'-phosphate serves as cofactor.

It carries out the reaction N(6)-[(R)-lipoyl]-L-lysyl-[glycine-cleavage complex H protein] + glycine + H(+) = N(6)-[(R)-S(8)-aminomethyldihydrolipoyl]-L-lysyl-[glycine-cleavage complex H protein] + CO2. Functionally, the glycine cleavage system catalyzes the degradation of glycine. The P protein binds the alpha-amino group of glycine through its pyridoxal phosphate cofactor; CO(2) is released and the remaining methylamine moiety is then transferred to the lipoamide cofactor of the H protein. This chain is Probable glycine dehydrogenase (decarboxylating) subunit 2, found in Chlorobium chlorochromatii (strain CaD3).